Reading from the N-terminus, the 165-residue chain is Interferon gamma (165 aa).

Positions 1–23 are cleaved as a signal peptide; the sequence is MKYTSYILAFQLCIVLGSLGCYC. Position 24 is a pyrrolidone carboxylic acid (Q24). Residues N48 and N120 are each glycosylated (N-linked (GlcNAc...) asparagine).

Belongs to the type II (or gamma) interferon family. As to quaternary structure, homodimer. Interacts with IFNGR1 (via extracellular domain); this interaction promotes IFNGR1 dimerization. In terms of tissue distribution, released primarily from activated T lymphocytes.

It localises to the secreted. In terms of biological role, type II interferon produced by immune cells such as T-cells and NK cells that plays crucial roles in antimicrobial, antiviral, and antitumor responses by activating effector immune cells and enhancing antigen presentation. Primarily signals through the JAK-STAT pathway after interaction with its receptor IFNGR1 to affect gene regulation. Upon IFNG binding, IFNGR1 intracellular domain opens out to allow association of downstream signaling components JAK2, JAK1 and STAT1, leading to STAT1 activation, nuclear translocation and transcription of IFNG-regulated genes. Many of the induced genes are transcription factors such as IRF1 that are able to further drive regulation of a next wave of transcription. Plays a role in class I antigen presentation pathway by inducing a replacement of catalytic proteasome subunits with immunoproteasome subunits. In turn, increases the quantity, quality, and repertoire of peptides for class I MHC loading. Increases the efficiency of peptide generation also by inducing the expression of activator PA28 that associates with the proteasome and alters its proteolytic cleavage preference. Up-regulates as well MHC II complexes on the cell surface by promoting expression of several key molecules such as cathepsins B/CTSB, H/CTSH, and L/CTSL. Participates in the regulation of hematopoietic stem cells during development and under homeostatic conditions by affecting their development, quiescence, and differentiation. The polypeptide is Interferon gamma (IFNG) (Cercocebus atys (Sooty mangabey)).